The sequence spans 131 residues: Ribosome-binding factor A (131 aa).

The protein belongs to the RbfA family. In terms of assembly, monomer. Binds 30S ribosomal subunits, but not 50S ribosomal subunits or 70S ribosomes.

Its subcellular location is the cytoplasm. Its function is as follows. One of several proteins that assist in the late maturation steps of the functional core of the 30S ribosomal subunit. Associates with free 30S ribosomal subunits (but not with 30S subunits that are part of 70S ribosomes or polysomes). Required for efficient processing of 16S rRNA. May interact with the 5'-terminal helix region of 16S rRNA. The sequence is that of Ribosome-binding factor A from Protochlamydia amoebophila (strain UWE25).